A 593-amino-acid polypeptide reads, in one-letter code: F-box/LRR-repeat protein 17 (593 aa).

In terms of domain architecture, F-box spans 120–177; that stretch reads DLDLQLDTDIVQPGRFHAVGLWEVLKRLPPSSLLMAARVCKGWRETSRKMWKAAEELR. LRR repeat units lie at residues 178–206, 207–232, 237–262, 276–304, 335–361, 362–387, 414–439, 477–502, and 503–525; these read IRVP…SLKI, ESDF…EITT, VNRI…KMEG, LSTL…SLEF, SLKL…SLVL, GINI…DLSG, CPNI…DCGM, LSLW…NLNL, and CSNL…YASG.

As to quaternary structure, part of a SCF (ASK-cullin-F-box) protein ligase complex. Interacts with SKP1A/ASK1, KRP4, KRP6 and KRP7. As to expression, expressed in developing pollen.

It is found in the nucleus. It participates in protein modification; protein ubiquitination. Essential protein for male fertility. Component of the SCF(ASK-cullin-F-box) E3 ubiquitin ligase complex SCF(FBL17), which mediates the ubiquitination and subsequent proteasomal degradation of target proteins. Enables the switch in cell cycle control leading to male germ cell lineage formation from microspores after meiosis. Targets CDKA-1 inhibitors the degradation specifically in male germ cells (e.g. KRP6 and KRP7) and thus enables CDKA-1 activation and germ cell S-phase progression. Promotes twin sperm cell production and double fertilization. In Arabidopsis thaliana (Mouse-ear cress), this protein is F-box/LRR-repeat protein 17 (FBL17).